The chain runs to 150 residues: UPF0260 protein CGSHiGG_00425 (150 aa).

Belongs to the UPF0260 family.

In Haemophilus influenzae (strain PittGG), this protein is UPF0260 protein CGSHiGG_00425.